Reading from the N-terminus, the 488-residue chain is MSLFDYTIKELEEKLHNKEITVEDLVKESYQRIHEVDQEVHAFLTLDEEKALEKARELDQLEDKTGILFGMPGGIKDNIVTKGLRTTCASQFLDNFNDPLYDATVVQKLQKENMVAVGKLNMDEFAMGSSNENSGYEPTRNPWNTEHVPGGSSGGSAAAVAAGEVLFTLGSDTGGSIRQPAAFCGVVGMKPTYGRVSRFGLVAFASSLDQIGPVTRTVEDNARVLEVIAGHDQMDTTSANVEVPSYTEALKQDVKGLKIAVPKEYLAEGVSKEVKDAILEALKVYESMGATWEEVSLPHSKYALATYYLLSSSEASANLARFDGVRYGVRSENADNMIDMFKKSRSEGFGEEVKRRIMLGTFALSSGYYDAYYKKAQKVRTLIKNDFDKILEEYDVIVGPTTPTPAFKVGEKTSDPLTMYANDILTIPVNLAGVPGISIPCGFSTEGLPIGLQIIGNYFDESTVYRTAYAYEQATEHHKKRPQLGGAK.

Catalysis depends on charge relay system residues lysine 76 and serine 152. The Acyl-ester intermediate role is filled by serine 176.

Belongs to the amidase family. GatA subfamily. In terms of assembly, heterotrimer of A, B and C subunits.

It carries out the reaction L-glutamyl-tRNA(Gln) + L-glutamine + ATP + H2O = L-glutaminyl-tRNA(Gln) + L-glutamate + ADP + phosphate + H(+). Functionally, allows the formation of correctly charged Gln-tRNA(Gln) through the transamidation of misacylated Glu-tRNA(Gln) in organisms which lack glutaminyl-tRNA synthetase. The reaction takes place in the presence of glutamine and ATP through an activated gamma-phospho-Glu-tRNA(Gln). This Oceanobacillus iheyensis (strain DSM 14371 / CIP 107618 / JCM 11309 / KCTC 3954 / HTE831) protein is Glutamyl-tRNA(Gln) amidotransferase subunit A.